We begin with the raw amino-acid sequence, 380 residues long: RNA binding protein fox-1 homolog 2 (380 aa).

Composition is skewed to polar residues over residues 1-20 and 36-56; these read MEKNKMVSQGNQEPTATPDT and NGLSTDYGSQHTQEYATQSTE. The interval 1-117 is disordered; the sequence is MEKNKMVSQG…TPKRLHVSNI (117 aa). Positions 72-102 are enriched in low complexity; sequence STPATSTANASSTTDGSQTEGQQSQTQNSEN. One can recognise an RRM domain in the interval 110–186; that stretch reads KRLHVSNIPF…RKIEVNNATA (77 aa).

Its subcellular location is the nucleus. It localises to the cytoplasm. RNA-binding protein that regulates alternative splicing events by binding to 5'-UGCAUGU-3' elements. Regulates alternative splicing of tissue-specific exons. The polypeptide is RNA binding protein fox-1 homolog 2 (rbfox2) (Xenopus tropicalis (Western clawed frog)).